A 200-amino-acid chain; its full sequence is Serine/threonine-protein kinase mos (200 aa).

Residues 2–200 (LCLLQPLGSG…ELLKGERVTA (199 aa)) form the Protein kinase domain. Residues 8 to 16 (LGSGGFGSV) and lysine 29 contribute to the ATP site. Aspartate 143 serves as the catalytic Proton acceptor.

It belongs to the protein kinase superfamily. Ser/Thr protein kinase family.

The catalysed reaction is L-seryl-[protein] + ATP = O-phospho-L-seryl-[protein] + ADP + H(+). The enzyme catalyses L-threonyl-[protein] + ATP = O-phospho-L-threonyl-[protein] + ADP + H(+). The polypeptide is Serine/threonine-protein kinase mos (MOS) (Ciconia nigra (Black stork)).